The chain runs to 1198 residues: MDKLPPSMRKRLYSLPQQVGAKAWIMDEEEDGEEEGAGGLQDPSRRSIRLRPLPSPSPSVAAGCSESRGAALGAADSEGPGRSAGKSSTNGDCRRFRGSLASLGSRGGGSGGAGGGSSLGHLHDSAEERRLIAAEGDASPGEDRTPPGLATEPERPGAAAQPAASPPPQQPPQPASASCEQPSADTAIKVEGGAAASDQILPEAEVRLGQSGFMQRQFGAMLQPGVNKFSLRMFGSQKAVEREQERVKSAGFWIIHPYSDFRFYWDLTMLLLMVGNLIIIPVGITFFKDENTTPWIVFNVVSDTFFLIDLVLNFRTGIVVEDNTEIILDPQRIKMKYLKSWFVVDFISSIPVDYIFLIVETRIDSEVYKTARALRIVRFTKILSLLRLLRLSRLIRYIHQWEEIFHMTYDLASAVVRIVNLIGMMLLLCHWDGCLQFLVPMLQDFPHDCWVSINGMVNNSWGKQYSYALFKAMSHMLCIGYGRQAPVGMSDVWLTMLSMIVGATCYAMFIGHATALIQSLDSSRRQYQEKYKQVEQYMSFHKLPPDTRQRIHDYYEHRYQGKMFDEESILGELSEPLREEIINFNCRKLVASMPLFANADPNFVTSMLTKLRFEVFQPGDYIIREGTIGKKMYFIQHGVVSVLTKGNKETKLADGSYFGEICLLTRGRRTASVRADTYCRLYSLSVDNFNEVLEEYPMMRRAFETVALDRLDRIGKKNSILLHKVQHDLNSGVFNYQENEIIQQIVRHDREMAHCAHRVQAAASATPTPTPVIWTPLIQAPLQAAAATTSVAIALTHHPRLPAAIFRPPPGPGLGNLGAGQTPRHPRRLQSLIPSALGSASPASSPSQVDTPSSSSFHIQQLAGFSAPPGLSPLLPSSSSSPPPGACSSPPAPTPSTSTAATTTGFGHFHKALGGSLSSSDSPLLTPLQPGARSPQAAQPPPPLPGARGGLGLLEHFLPPPPSSRSPSSSPGQLGQPPGELSPGLAAGPPSTPETPPRPERPSFMAGASGGASPVAFTPRGGLSPPGHSPGPPRTFPSAPPRASGSHGSLLLPPASSPPPPQVPQRRGTPPLTPGRLTQDLKLISASQPALPQDGAQTLRRASPHSSGESMAAFSLYPRAGGGSGSSGGLGPPGRPYGAIPGQHVTLPRKTSSGSLPPPLSLFGARAASSGGPPLTAAPQREPGARSEPVRSKLPSNL.

Topologically, residues M1–D266 are cytoplasmic. The segment at I25–S183 is disordered. Positions M26–G36 are enriched in acidic residues. A compositionally biased stretch (gly residues) spans S105–S118. A compositionally biased stretch (basic and acidic residues) spans H121–I132. S139 is modified (phosphoserine). Over residues A164–P174 the composition is skewed to pro residues. The segment at G209–D260 is involved in subunit assembly. A helical membrane pass occupies residues L267 to F287. Residues K288 to T293 are Extracellular-facing. The chain crosses the membrane as a helical span at residues P294–F314. The Cytoplasmic segment spans residues R315 to S340. A helical membrane pass occupies residues W341–T361. At R362–Y368 the chain is on the extracellular side. A helical; Voltage-sensor transmembrane segment spans residues K369–L389. The Cytoplasmic portion of the chain corresponds to R390–N420. A helical transmembrane segment spans residues L421–M441. Residues L442–Q464 are Extracellular-facing. N-linked (GlcNAc...) asparagine glycosylation is present at N458. Positions Y465–P486 form an intramembrane region, pore-forming. The Extracellular segment spans residues V487–M496. A helical transmembrane segment spans residues L497–I517. Topologically, residues Q518 to L1198 are cytoplasmic. 4 residues coordinate 3',5'-cyclic GMP: Y559, K562, F564, and E566. 7 residues coordinate 3',5'-cyclic AMP: G659, E660, C662, R669, T670, V673, and R710. Positions A804–L1198 are disordered. Composition is skewed to low complexity over residues S831–S856 and S866–S880. A compositionally biased stretch (pro residues) spans S881–T894. Low complexity-rich tracts occupy residues P895–G905, L913–A937, and R965–L985. Pro residues predominate over residues G1027–P1040. Positions A1043–P1054 are enriched in low complexity. S1103 and S1106 each carry phosphoserine. Positions A1120–P1132 are enriched in gly residues.

This sequence belongs to the potassium channel HCN family. In terms of assembly, homotetramer. The potassium channel is composed of a homo- or heterotetrameric complex of pore-forming subunits. Interacts with PEX5L with a 4:4 HCN4:PEX5L stoichiometry; reduces the effects of cAMP on the voltage-dependence and rate of activation. Interacts with IRAG1; regulates HCN4 channel activity. Interacts with IRAG2; regulates HCN4 channel activity. Post-translationally, S-palmitoylated. As to expression, highly expressed in pyramidal and granule layer of the hippocampus, in thalamus anterior nucleus, in the supraoptic nucleus in hypothalamus, in cerebellum, and in trapezoid nuclei and superior olivary complex in the auditory system. Detected in a subset of elongated cells in taste buds.

Its subcellular location is the cell membrane. It carries out the reaction K(+)(in) = K(+)(out). The catalysed reaction is Na(+)(in) = Na(+)(out). Activated by cAMP and at 100 times higher concentrationsand to a lesser extent by cGMP and cCMP. cAMP binding causes a conformation change that leads to the assembly of an active tetramer and channel opening. Binding of cAMP removes a tonic inhibition conferred by cyclic nucleotide-binding domain (CNBD) on channel opening. Cyclic dinucleotides can modulate HCN4 channel; cyclic dinucleotides acting as potent antagonists of cAMP. Inhibited by extracellular Cs(+) ions. Auxiliary subunits can also regulate HCN4 channel. IRAG1 causes a gain-of-function by shifting HCN4 activation to more depolarized membrane potentials in the absence of cAMP. In contrast, IRAG2 causes a loss-of-function by inhibiting cAMP-dependent potentiation of HCN4 activation. In terms of biological role, hyperpolarization-activated ion channel that are permeable to Na(+) and K(+) ions with very slow activation and inactivation. Exhibits higher selectivity for K(+) over Na(+) ions. Contributes to the native pacemaker currents in heart (If) that regulate the rhythm of heart beat. Contributes to the native pacemaker currents in neurons (Ih). May mediate responses to sour stimuli. In Rattus norvegicus (Rat), this protein is Potassium/sodium hyperpolarization-activated cyclic nucleotide-gated channel 4 (Hcn4).